The chain runs to 289 residues: Doxorubicin resistance ABC transporter permease protein DrrB (289 aa).

The ABC transmembrane type-2 domain maps to 47–282; that stretch reads GEVLTTVGAP…FVVILALSST (236 aa). 6 consecutive transmembrane segments (helical) span residues 49–69, 88–108, 138–158, 166–186, 199–219, and 266–286; these read VLTT…PFAI, QYIT…GSGF, WVAV…GYVI, ALYI…LSFA, AMLP…IGLM, and TLTW…IVLA.

This sequence belongs to the ABC-2 integral membrane protein family. As to quaternary structure, the complex is composed of two ATP-binding proteins (DrrA) and two transmembrane proteins (DrrB and DrrC).

The protein localises to the cell membrane. In terms of biological role, part of the ABC transporter complex DrrABC involved in doxorubicin resistance. Probably responsible for the translocation of the substrate across the membrane. The protein is Doxorubicin resistance ABC transporter permease protein DrrB (drrB) of Mycobacterium tuberculosis (strain CDC 1551 / Oshkosh).